The sequence spans 392 residues: MATHSLSFFFRVLLLLFLTLSERIKGQGVGINYGQIANNLPSPARVAVLLRSLNITRVKLYDADPNVLFSFSNSQVDFMIGLGNEYLQNMSTDPTKAQDWLQQRLEPHISKTRITSIVVGNEIFKTNDHVLIQSLLPAMKSVYAALTNLGLEKQVTVTSAHSLDILSTSYPPSSGSFKEEFIQYLQPLLDFHSQIESPFLINAYPFFAYKDSPKEVPLEYVLFQPNQGMVDPNTNLHYDNMLFAQVDALYSAIKTLGHTDIEVRISETGWPSKGDENEIGASPENAALYNGNLLKLIQQRKGTPAKQSVPIDVYVFALFNENLKPGPVSERNYGLFYPDGKPVYNVGMQGYLPDIIYTSRATTIKILNLWRVVMGLAVAWFILDMGDKMRMR.

Positions methionine 1–serine 21 are cleaved as a signal peptide. 2 N-linked (GlcNAc...) asparagine glycosylation sites follow: asparagine 54 and asparagine 89. Residue glutamate 122 is the Proton donor of the active site. The active-site Nucleophile is the glutamate 267. The GPI-anchor amidated serine moiety is linked to residue serine 359. Positions arginine 360–arginine 392 are cleaved as a propeptide — removed in mature form.

This sequence belongs to the glycosyl hydrolase 17 family.

The protein localises to the cell membrane. It is found in the secreted. Its subcellular location is the cell wall. The protein resides in the cytoplasm. It catalyses the reaction Hydrolysis of (1-&gt;3)-beta-D-glucosidic linkages in (1-&gt;3)-beta-D-glucans.. The chain is Glucan endo-1,3-beta-glucosidase 14 from Arabidopsis thaliana (Mouse-ear cress).